We begin with the raw amino-acid sequence, 511 residues long: Histidine ammonia-lyase (511 aa).

The 5-imidazolinone (Ala-Gly) cross-link spans 142–144; it reads ASG. The residue at position 143 (serine 143) is a 2,3-didehydroalanine (Ser).

Belongs to the PAL/histidase family. Post-translationally, contains an active site 4-methylidene-imidazol-5-one (MIO), which is formed autocatalytically by cyclization and dehydration of residues Ala-Ser-Gly.

It is found in the cytoplasm. It catalyses the reaction L-histidine = trans-urocanate + NH4(+). It functions in the pathway amino-acid degradation; L-histidine degradation into L-glutamate; N-formimidoyl-L-glutamate from L-histidine: step 1/3. The polypeptide is Histidine ammonia-lyase (Brucella suis biovar 1 (strain 1330)).